Consider the following 970-residue polypeptide: Disease resistance protein RGA2 (970 aa).

In terms of domain architecture, NB-ARC spans 135 to 438 (RQAVRRETGS…MAHGFLLSKG (304 aa)). ATP is bound at residue 182–189 (GMGGLGKT). LRR repeat units follow at residues 525-548 (FISLRVLNLGDSTFNKLPSSIGDL), 550-571 (HLRYLNLYGSGMRSLPKQLCKL), 573-594 (NLQTLDLQYCTKLCCLPKETSK), 595-619 (LGSLRNLLLDGSQSLTCMPPRIGSL), 638-662 (LGELGNLNLYGSIKISHLERVKNDK), 672-697 (KGNLHSLSMSWNNFGPHIYESEEVKV), 752-777 (LPCLESLELHWGSADVEYVEEVDIDV), 787-811 (FPSLRKLDIWDFGSLKGLLKKEGEE), 813-832 (FPVLEEMIIHECPFLTLSSN), 833-857 (LRALTSLRICYNKVATSFPEEMFKN), 859-882 (ANLKYLTISRCNNLKELPTSLASL), 884-906 (ALKSLKIQLCCALESLPEEGLEG), 907-931 (LSSLTELFVEHCNMLKCLPEGLQHL), and 946-970 (IKRCEKGIGEDWHKISHIPNVNIYI).

Belongs to the disease resistance NB-LRR family.

Its function is as follows. Disease resistance protein. Resistance proteins guard the plant against pathogens that contain an appropriate avirulence protein via a direct or indirect interaction with this avirulence protein. That triggers a defense system which restricts the pathogen growth. Confers a broad resistance to all known races of P.infestans. This chain is Disease resistance protein RGA2 (RGA2), found in Solanum bulbocastanum (Wild potato).